Consider the following 71-residue polypeptide: Small ribosomal subunit protein bS21 (71 aa).

Positions 39-71 (EKPTTVRKRAKAAAQKRHAKKLARENARRVRLY) are disordered. The span at 43–59 (TVRKRAKAAAQKRHAKK) shows a compositional bias: basic residues. Residues 60–71 (LARENARRVRLY) show a composition bias toward basic and acidic residues.

It belongs to the bacterial ribosomal protein bS21 family.

In Vibrio atlanticus (strain LGP32) (Vibrio splendidus (strain Mel32)), this protein is Small ribosomal subunit protein bS21.